Here is a 420-residue protein sequence, read N- to C-terminus: Protein phosphatase methylesterase 1 (420 aa).

Composition is skewed to low complexity over residues 18–28 (PEAPLLSESSS) and 42–51 (SSVSSTGTVI). The disordered stretch occupies residues 18–51 (PEAPLLSESSSMNHPAESSHDEDSSSVSSTGTVI). Active-site residues include Ser197, Asp223, and His354.

The protein belongs to the AB hydrolase superfamily.

The enzyme catalyses [phosphatase 2A protein]-C-terminal L-leucine methyl ester + H2O = [phosphatase 2A protein]-C-terminal L-leucine + methanol + H(+). In terms of biological role, demethylates proteins that have been reversibly carboxymethylated. Demethylates the phosphatase PP2A catalytic subunit. This Aspergillus fumigatus (strain ATCC MYA-4609 / CBS 101355 / FGSC A1100 / Af293) (Neosartorya fumigata) protein is Protein phosphatase methylesterase 1 (ppe1).